Consider the following 474-residue polypeptide: 3-isopropylmalate dehydratase large subunit (474 aa).

[4Fe-4S] cluster contacts are provided by C355, C415, and C418.

It belongs to the aconitase/IPM isomerase family. LeuC type 1 subfamily. Heterodimer of LeuC and LeuD. [4Fe-4S] cluster serves as cofactor.

The catalysed reaction is (2R,3S)-3-isopropylmalate = (2S)-2-isopropylmalate. It functions in the pathway amino-acid biosynthesis; L-leucine biosynthesis; L-leucine from 3-methyl-2-oxobutanoate: step 2/4. Its function is as follows. Catalyzes the isomerization between 2-isopropylmalate and 3-isopropylmalate, via the formation of 2-isopropylmaleate. The protein is 3-isopropylmalate dehydratase large subunit of Shewanella sp. (strain MR-4).